The following is a 436-amino-acid chain: Trigger factor (436 aa).

A PPIase FKBP-type domain is found at 164–249 (GDTVVIDYKG…IHEIKEKQLP (86 aa)).

This sequence belongs to the FKBP-type PPIase family. Tig subfamily.

The protein resides in the cytoplasm. The catalysed reaction is [protein]-peptidylproline (omega=180) = [protein]-peptidylproline (omega=0). In terms of biological role, involved in protein export. Acts as a chaperone by maintaining the newly synthesized protein in an open conformation. Functions as a peptidyl-prolyl cis-trans isomerase. The protein is Trigger factor of Limosilactobacillus reuteri (strain DSM 20016) (Lactobacillus reuteri).